The sequence spans 283 residues: Pantothenate synthetase (283 aa).

30–37 (MGNLHQGH) contacts ATP. Residue histidine 37 is the Proton donor of the active site. Position 61 (glutamine 61) interacts with (R)-pantoate. Glutamine 61 is a binding site for beta-alanine. Position 149–152 (149–152 (GEKD)) interacts with ATP. Glutamine 155 lines the (R)-pantoate pocket. Residues valine 178 and 186–189 (FSSR) contribute to the ATP site.

This sequence belongs to the pantothenate synthetase family. As to quaternary structure, homodimer.

Its subcellular location is the cytoplasm. The catalysed reaction is (R)-pantoate + beta-alanine + ATP = (R)-pantothenate + AMP + diphosphate + H(+). It participates in cofactor biosynthesis; (R)-pantothenate biosynthesis; (R)-pantothenate from (R)-pantoate and beta-alanine: step 1/1. In terms of biological role, catalyzes the condensation of pantoate with beta-alanine in an ATP-dependent reaction via a pantoyl-adenylate intermediate. This Proteus mirabilis (strain HI4320) protein is Pantothenate synthetase.